The chain runs to 305 residues: uncharacterized protein (305 aa).

The interval 267–287 is disordered; that stretch reads ADEQEKNWNGGAKKNARAEPA.

Belongs to the DnaB/DnaD family.

This is an uncharacterized protein from Listeria innocua serovar 6a (strain ATCC BAA-680 / CLIP 11262).